The following is a 355-amino-acid chain: UDP-N-acetylglucosamine--N-acetylmuramyl-(pentapeptide) pyrophosphoryl-undecaprenol N-acetylglucosamine transferase (355 aa).

Residues 11–13, asparagine 120, arginine 161, serine 188, and glutamine 280 each bind UDP-N-acetyl-alpha-D-glucosamine; that span reads TGG.

It belongs to the glycosyltransferase 28 family. MurG subfamily.

It is found in the cell inner membrane. The catalysed reaction is di-trans,octa-cis-undecaprenyl diphospho-N-acetyl-alpha-D-muramoyl-L-alanyl-D-glutamyl-meso-2,6-diaminopimeloyl-D-alanyl-D-alanine + UDP-N-acetyl-alpha-D-glucosamine = di-trans,octa-cis-undecaprenyl diphospho-[N-acetyl-alpha-D-glucosaminyl-(1-&gt;4)]-N-acetyl-alpha-D-muramoyl-L-alanyl-D-glutamyl-meso-2,6-diaminopimeloyl-D-alanyl-D-alanine + UDP + H(+). The protein operates within cell wall biogenesis; peptidoglycan biosynthesis. In terms of biological role, cell wall formation. Catalyzes the transfer of a GlcNAc subunit on undecaprenyl-pyrophosphoryl-MurNAc-pentapeptide (lipid intermediate I) to form undecaprenyl-pyrophosphoryl-MurNAc-(pentapeptide)GlcNAc (lipid intermediate II). This chain is UDP-N-acetylglucosamine--N-acetylmuramyl-(pentapeptide) pyrophosphoryl-undecaprenol N-acetylglucosamine transferase, found in Prochlorococcus marinus (strain MIT 9211).